Consider the following 63-residue polypeptide: Large ribosomal subunit protein uL29 (63 aa).

It belongs to the universal ribosomal protein uL29 family.

The sequence is that of Large ribosomal subunit protein uL29 from Chromohalobacter salexigens (strain ATCC BAA-138 / DSM 3043 / CIP 106854 / NCIMB 13768 / 1H11).